A 560-amino-acid polypeptide reads, in one-letter code: Eukaryotic translation initiation factor 3 subunit D-1 (560 aa).

The segment at 98–166 (VQKPPHQRGR…RGPPPKMRES (69 aa)) is disordered. Residues 100–121 (KPPHQRGRFRNMRNSRSGRGRN) show a composition bias toward basic residues. Threonine 128 bears the Phosphothreonine mark. The segment covering 147 to 156 (GRGMGKKFGH) has biased composition (basic residues). The segment at 291-305 (EFDLLTVNESSVEPP) is RNA gate.

It belongs to the eIF-3 subunit D family. Component of the eukaryotic translation initiation factor 3 (eIF-3) complex. The eIF-3 complex interacts with pix.

The protein localises to the cytoplasm. MRNA cap-binding component of the eukaryotic translation initiation factor 3 (eIF-3) complex, which is involved in protein synthesis of a specialized repertoire of mRNAs and, together with other initiation factors, stimulates binding of mRNA and methionyl-tRNAi to the 40S ribosome. The eIF-3 complex specifically targets and initiates translation of a subset of mRNAs involved in cell proliferation. In the eIF-3 complex, eif3d specifically recognizes and binds the 7-methylguanosine cap of a subset of mRNAs. In Drosophila simulans (Fruit fly), this protein is Eukaryotic translation initiation factor 3 subunit D-1.